The following is a 76-amino-acid chain: Alpha/kappa-conotoxin pl14a (76 aa).

Residues 1–24 (MPSVRSVTCCCLLWMMFSVQLVTP) form the signal peptide. A propeptide spanning residues 25 to 39 (GSPGTAQLSGHRTAR) is cleaved from the precursor. Cystine bridges form between cysteine 46–cysteine 61 and cysteine 50–cysteine 63. Arginine amide is present on arginine 64. A propeptide spanning residues 65–76 (GKRDAVSSSMAV) is cleaved from the precursor.

Belongs to the conotoxin J superfamily. As to expression, expressed by the venom duct.

Its subcellular location is the secreted. In terms of biological role, highly inhibits both nicotinic acetylcholine receptors (neuronal (IC(50)=8.7 uM for alpha-3/beta-4) and muscular (IC(50)=0.54 uM for alpha-1-beta-1-epsilon-delta (CHRNA1-CHRNB1-CHRND-CHRNE)) subtypes) and the voltage-gated potassium channel Kv1.6/KCNA6 subtype (IC(50)=1.59 uM). The sequence is that of Alpha/kappa-conotoxin pl14a from Conus planorbis (Planorbis cone).